Reading from the N-terminus, the 404-residue chain is Tryptophan synthase beta chain (404 aa).

N6-(pyridoxal phosphate)lysine is present on K94.

Belongs to the TrpB family. Tetramer of two alpha and two beta chains. Pyridoxal 5'-phosphate is required as a cofactor.

The enzyme catalyses (1S,2R)-1-C-(indol-3-yl)glycerol 3-phosphate + L-serine = D-glyceraldehyde 3-phosphate + L-tryptophan + H2O. It participates in amino-acid biosynthesis; L-tryptophan biosynthesis; L-tryptophan from chorismate: step 5/5. Functionally, the beta subunit is responsible for the synthesis of L-tryptophan from indole and L-serine. The chain is Tryptophan synthase beta chain from Staphylococcus saprophyticus subsp. saprophyticus (strain ATCC 15305 / DSM 20229 / NCIMB 8711 / NCTC 7292 / S-41).